We begin with the raw amino-acid sequence, 505 residues long: Apolipoprotein N-acyltransferase (505 aa).

The next 6 helical transmembrane spans lie at 23 to 43, 58 to 78, 85 to 105, 125 to 145, 162 to 182, and 192 to 212; these read LLAL…AVLY, GWWF…VSMN, PLLA…FFAL, LCFA…LTGF, LAPL…AALL, and PSFL…GLAL. One can recognise a CN hydrolase domain in the interval 230-469; sequence IQGNVEQDLK…QAVLYGEVVP (240 aa). Residue Glu269 is the Proton acceptor of the active site. Residue Lys329 is part of the active site. Residue Cys381 is the Nucleophile of the active site. The chain crosses the membrane as a helical span at residues 482 to 502; sequence WPLAIVCALLLGWALLAGRIA.

Belongs to the CN hydrolase family. Apolipoprotein N-acyltransferase subfamily.

The protein localises to the cell inner membrane. The catalysed reaction is N-terminal S-1,2-diacyl-sn-glyceryl-L-cysteinyl-[lipoprotein] + a glycerophospholipid = N-acyl-S-1,2-diacyl-sn-glyceryl-L-cysteinyl-[lipoprotein] + a 2-acyl-sn-glycero-3-phospholipid + H(+). It participates in protein modification; lipoprotein biosynthesis (N-acyl transfer). Catalyzes the phospholipid dependent N-acylation of the N-terminal cysteine of apolipoprotein, the last step in lipoprotein maturation. The protein is Apolipoprotein N-acyltransferase of Pseudomonas putida (strain ATCC 47054 / DSM 6125 / CFBP 8728 / NCIMB 11950 / KT2440).